The following is a 694-amino-acid chain: Prolyl 3-hydroxylase 2 (694 aa).

Positions 1-23 are cleaved as a signal peptide; it reads MAPGSRSWGAVLLLAAMLPAACG. TPR repeat units lie at residues 35 to 68, 136 to 169, 196 to 229, and 292 to 325; these read FDAL…RREL, RVPY…NPEH, HMED…YYAE, and PLHY…HPDD. The stretch at 386-418 forms a coiled coil; that stretch reads KRYGARQDEHSVPSSISSEPEDGPRLSLTKKPT. The interval 395 to 427 is disordered; the sequence is HSVPSSISSEPEDGPRLSLTKKPTPKPDRELKE. N-linked (GlcNAc...) asparagine glycosylation is found at Asn446 and Asn535. Residues 543 to 657 enclose the Fe2OG dioxygenase domain; the sequence is THLVCRTALS…RCAVALWFTL (115 aa). Fe cation contacts are provided by His566, Asp568, and His638. Residue Arg648 is part of the active site. Residues 691-694 carry the Prevents secretion from ER motif; it reads KDEL.

This sequence belongs to the leprecan family. Fe cation is required as a cofactor. Requires L-ascorbate as cofactor.

The protein localises to the endoplasmic reticulum. It localises to the sarcoplasmic reticulum. It is found in the golgi apparatus. The catalysed reaction is L-prolyl-[collagen] + 2-oxoglutarate + O2 = trans-3-hydroxy-L-prolyl-[collagen] + succinate + CO2. Functionally, prolyl 3-hydroxylase that catalyzes the post-translational formation of 3-hydroxyproline on collagens. Contributes to proline 3-hydroxylation of collagen COL4A1 and COL1A1 in tendons, the eye sclera and in the eye lens capsule. Has high activity with the type IV collagen COL4A1, and lower activity with COL1A1. Catalyzes hydroxylation of the first Pro in Gly-Pro-Hyp sequences where Hyp is 4-hydroxyproline. Has no activity on substrates that lack 4-hydroxyproline in the third position. In Gallus gallus (Chicken), this protein is Prolyl 3-hydroxylase 2.